A 690-amino-acid chain; its full sequence is Glycine--tRNA ligase beta subunit (690 aa).

Belongs to the class-II aminoacyl-tRNA synthetase family. As to quaternary structure, tetramer of two alpha and two beta subunits.

Its subcellular location is the cytoplasm. The enzyme catalyses tRNA(Gly) + glycine + ATP = glycyl-tRNA(Gly) + AMP + diphosphate. The polypeptide is Glycine--tRNA ligase beta subunit (Pediococcus pentosaceus (strain ATCC 25745 / CCUG 21536 / LMG 10740 / 183-1w)).